A 295-amino-acid polypeptide reads, in one-letter code: uncharacterized protein (295 aa).

NAD(+) contacts are provided by residues 11-25 (GYIG…MAKR) and Thr101. The active site involves Lys176. An NAD(+)-binding site is contributed by Lys252.

The protein belongs to the HIBADH-related family.

This is an uncharacterized protein from Mycobacterium tuberculosis (strain CDC 1551 / Oshkosh).